An 812-amino-acid chain; its full sequence is Hyaluronate lyase HylB (812 aa).

Residues 1–32 (MFGTPSRRTFLTASALSAMALAASPTVTDAIA) constitute a signal peptide (tat-type signal). Catalysis depends on residues asparagine 222, histidine 272, and tyrosine 281.

This sequence belongs to the polysaccharide lyase 8 family. In terms of processing, predicted to be exported by the Tat system. The position of the signal peptide cleavage has been experimentally proven.

It localises to the secreted. It catalyses the reaction [hyaluronan](n) = n 3-(4-deoxy-beta-D-gluc-4-enuronosyl)-N-acetyl-D-glucosamine + H2O. Degrades hyaluronic acid (HA) exclusively into HA disaccharides (HA-2). Produced HA-2s confer anti-inflammatory properties leading to reduced immunopathology in the mouse model of acne. This chain is Hyaluronate lyase HylB, found in Cutibacterium acnes (Propionibacterium acnes).